A 455-amino-acid polypeptide reads, in one-letter code: Ribosome biogenesis protein NOP53 (455 aa).

Positions 1 to 15 (MAPTNLTKKPSQYKQ) are enriched in polar residues. A disordered region spans residues 1 to 25 (MAPTNLTKKPSQYKQSSRKGKKAWR). Residues 16–25 (SSRKGKKAWR) show a composition bias toward basic residues. S31 bears the Phosphoserine mark. The disordered stretch occupies residues 264-333 (HLMETLDDNE…RNKAKRHEEK (70 aa)). Residues 268–294 (TLDDNEEEESSSNEEEEEEEEENENEN) are compositionally biased toward acidic residues. Positions 314-328 (VKNKKKTKYQRNKAK) are enriched in basic residues.

The protein belongs to the NOP53 family. In terms of assembly, interacts with CBF5, FPR3, FPR4, NOP2, PIH1, RRN3, RRP6 and PAP2. Interacts with pre-60S ribosomal particles.

It is found in the nucleus. The protein resides in the nucleolus. It localises to the nucleoplasm. Functionally, late-acting factor in the nuclear maturation of 60S ribosomal subunits, which is required for normal acquisition of export competence. Required for the export of the large subunit. Acts to stimulate the RNase activity of the exosome complex, and may recruit the exosome to 7S pre-rRNA for processing. Associates with numerous RNAs including the 27S and 7S pre-rRNAs and the box H/ACA snoRNA snR37. Also interacts (via N-terminal region) with the mature 25S rRNA and the mature 5.8S rRNA. In Saccharomyces cerevisiae (strain ATCC 204508 / S288c) (Baker's yeast), this protein is Ribosome biogenesis protein NOP53.